We begin with the raw amino-acid sequence, 342 residues long: Trans-3-hydroxy-L-proline dehydratase (342 aa).

Ser-90 acts as the Proton acceptor in catalysis. Residues 91–92 (GS), Asp-252, and 257–258 (GT) each bind substrate.

The protein belongs to the proline racemase family.

It catalyses the reaction trans-3-hydroxy-L-proline = 1-pyrroline-2-carboxylate + H2O. Catalyzes the dehydration of trans-3-hydroxy-L-proline (t3LHyp) to Delta(1)-pyrroline-2-carboxylate (Pyr2C). Is likely involved in a degradation pathway that converts t3LHyp to L-proline. Displays neither proline racemase activity nor 4-hydroxyproline 2-epimerase activity. The sequence is that of Trans-3-hydroxy-L-proline dehydratase from Allorhizobium ampelinum (strain ATCC BAA-846 / DSM 112012 / S4) (Agrobacterium vitis (strain S4)).